Consider the following 278-residue polypeptide: Ferredoxin--NADP reductase A (278 aa).

The 101-residue stretch at 3–103 (PGYTEETVLE…KRATGTLTIG (101 aa)) folds into the FAD-binding FR-type domain. Residues 52–55 (RAYS) and T118 contribute to the FAD site.

The protein belongs to the ferredoxin--NADP reductase type 1 family. The cofactor is FAD.

The catalysed reaction is 2 reduced [4Fe-4S]-[ferredoxin] + NADP(+) + H(+) = 2 oxidized [4Fe-4S]-[ferredoxin] + NADPH. Functionally, transports electrons between NADPH and ferredoxin. Can transfer electrons to ferredoxins Fdx2 and Fdx8. Prefers NADPH to NADH. The polypeptide is Ferredoxin--NADP reductase A (Sorangium cellulosum (strain So ce56) (Polyangium cellulosum (strain So ce56))).